A 920-amino-acid polypeptide reads, in one-letter code: Coatomer subunit beta'-1 (920 aa).

8 WD repeats span residues 13–52 (QRSE…MVKS), 55–94 (VTEL…KIKV), 97–136 (AHAD…LCTQ), 140–180 (GHSH…PNFT), 183–224 (AHLK…CVQT), 227–266 (GHTH…LENT), 350–392 (TCDL…GSAL), and 460–500 (RIDV…SYFD). The interval 850–920 (LEQGDVLDEV…EQWVLTPPQE (71 aa)) is disordered. Residues 854 to 875 (DVLDEVGEEGEDGEEEEEEDRQ) are compositionally biased toward acidic residues.

The protein belongs to the WD repeat COPB2 family. Oligomeric complex that consists of at least the alpha, beta, beta', gamma, delta, epsilon and zeta subunits.

It is found in the cytoplasm. It localises to the golgi apparatus membrane. Its subcellular location is the cytoplasmic vesicle. The protein resides in the COPI-coated vesicle membrane. Its function is as follows. The coatomer is a cytosolic protein complex that binds to dilysine motifs and reversibly associates with Golgi non-clathrin-coated vesicles, which further mediate biosynthetic protein transport from the ER, via the Golgi up to the trans Golgi network. Coatomer complex is required for budding from Golgi membranes, and is essential for the retrograde Golgi-to-ER transport of dilysine-tagged proteins. This is Coatomer subunit beta'-1 from Arabidopsis thaliana (Mouse-ear cress).